The primary structure comprises 330 residues: Putative F-box protein At1g57690 (330 aa).

Residues V25–Y72 form the F-box domain.

This is Putative F-box protein At1g57690 from Arabidopsis thaliana (Mouse-ear cress).